The following is a 275-amino-acid chain: Exosome complex component RRP40 (275 aa).

Ala2 is subject to N-acetylalanine. Lys151 participates in a covalent cross-link: Glycyl lysine isopeptide (Lys-Gly) (interchain with G-Cter in SUMO2).

It belongs to the RRP40 family. Component of the RNA exosome core complex (Exo-9), composed of EXOSC1, EXOSC2, EXOSC3, EXOSC4, EXOSC5, EXOSC6, EXOSC7, EXOSC8 and EXOSC9; within the complex interacts with EXOSC5 and EXOSC9. The catalytically inactive RNA exosome core complex (Exo-9) associates with the catalytic subunit EXOSC10/RRP6. Exo-9 may associate with DIS3 to form the nucleolar exosome complex, or DIS3L to form the cytoplasmic exosome complex. Exo-9 is formed by a hexameric base ring consisting of the heterodimers EXOSC4-EXOSC9, EXOSC5-EXOSC8 and EXOSC6-EXOSC7, and a cap ring consisting of EXOSC1, EXOSC2 and EXOSC3. The RNA exosome complex associates with cofactors C1D/RRP47, MPHOSPH6/MPP6 and MTREX/MTR4. Interacts with MPHOSPH6/MPP6; the interaction is direct. Interacts with GTPBP1. Interacts with ZC3HAV1. Interacts with DDX17 only in the presence of ZC3HAV1 in an RNA-independent manner. Interacts with DHX36; this interaction occurs in a RNase-insensitive manner. Interacts with HBS1L isoform 2.

The protein resides in the cytoplasm. It localises to the nucleus. Its subcellular location is the nucleolus. In terms of biological role, non-catalytic component of the RNA exosome complex which has 3'-&gt;5' exoribonuclease activity and participates in a multitude of cellular RNA processing and degradation events. In the nucleus, the RNA exosome complex is involved in proper maturation of stable RNA species such as rRNA, snRNA and snoRNA, in the elimination of RNA processing by-products and non-coding 'pervasive' transcripts, such as antisense RNA species and promoter-upstream transcripts (PROMPTs), and of mRNAs with processing defects, thereby limiting or excluding their export to the cytoplasm. The RNA exosome may be involved in Ig class switch recombination (CSR) and/or Ig variable region somatic hypermutation (SHM) by targeting AICDA deamination activity to transcribed dsDNA substrates. In the cytoplasm, the RNA exosome complex is involved in general mRNA turnover and specifically degrades inherently unstable mRNAs containing AU-rich elements (AREs) within their 3' untranslated regions, and in RNA surveillance pathways, preventing translation of aberrant mRNAs. It seems to be involved in degradation of histone mRNA. The catalytic inactive RNA exosome core complex of 9 subunits (Exo-9) is proposed to play a pivotal role in the binding and presentation of RNA for ribonucleolysis, and to serve as a scaffold for the association with catalytic subunits and accessory proteins or complexes. EXOSC3 as peripheral part of the Exo-9 complex stabilizes the hexameric ring of RNase PH-domain subunits through contacts with EXOSC9 and EXOSC5. The polypeptide is Exosome complex component RRP40 (EXOSC3) (Homo sapiens (Human)).